The chain runs to 249 residues: Granaticin polyketide synthase putative ketoacyl reductase 2 (249 aa).

Leucine 12–valine 36 contributes to the NAD(+) binding site. Substrate is bound at residue serine 144. The active-site Proton acceptor is tyrosine 157.

It belongs to the short-chain dehydrogenases/reductases (SDR) family.

It participates in antibiotic biosynthesis; granaticin biosynthesis. The protein is Granaticin polyketide synthase putative ketoacyl reductase 2 (gra-orf6) of Streptomyces violaceoruber.